Reading from the N-terminus, the 258-residue chain is Protein T1 (258 aa).

Residues M1–A17 form the signal peptide. Residues N67, N151, and N172 are each glycosylated (N-linked (GlcNAc...) asparagine; by host).

Belongs to the poxviruses A41 family.

This chain is Protein T1, found in Rabbit fibroma virus (strain Kasza) (RFV).